Reading from the N-terminus, the 117-residue chain is Large ribosomal subunit protein eL34 (117 aa).

Residue S12 is modified to Phosphoserine. An N6-acetyllysine mark is found at K36 and K43. K108 participates in a covalent cross-link: Glycyl lysine isopeptide (Lys-Gly) (interchain with G-Cter in SUMO2).

Belongs to the eukaryotic ribosomal protein eL34 family. In terms of assembly, component of the large ribosomal subunit.

It is found in the cytoplasm. The protein localises to the cytosol. It localises to the endoplasmic reticulum. Component of the large ribosomal subunit. The ribosome is a large ribonucleoprotein complex responsible for the synthesis of proteins in the cell. This Rattus norvegicus (Rat) protein is Large ribosomal subunit protein eL34 (Rpl34).